The following is a 125-amino-acid chain: Methylglyoxal synthase (125 aa).

The MGS-like domain maps to 1-125; that stretch reads MTERLRIALI…TAEKLIKALD (125 aa). Substrate contacts are provided by residues H12, K16, 38–41, and 59–60; these read TGTT and SG. The active-site Proton donor/acceptor is D65. H92 is a binding site for substrate.

The protein belongs to the methylglyoxal synthase family.

It catalyses the reaction dihydroxyacetone phosphate = methylglyoxal + phosphate. In terms of biological role, catalyzes the formation of methylglyoxal from dihydroxyacetone phosphate. The polypeptide is Methylglyoxal synthase (Brucella anthropi (strain ATCC 49188 / DSM 6882 / CCUG 24695 / JCM 21032 / LMG 3331 / NBRC 15819 / NCTC 12168 / Alc 37) (Ochrobactrum anthropi)).